Here is a 123-residue protein sequence, read N- to C-terminus: Defensin beta 118 (123 aa).

The signal sequence occupies residues 1 to 19 (MKLLLLALPMLVLLPQVIP). Cystine bridges form between cysteine 27-cysteine 54, cysteine 34-cysteine 48, and cysteine 38-cysteine 55. A propeptide spanning residues 65–123 (VPTTSPTPLSDSTPGIIDDILTVRFTTDYFEVSSKKDMIEESEAGRGTETSLPNVHHSS) is cleaved from the precursor. The segment covering 100–110 (KDMIEESEAGR) has biased composition (basic and acidic residues). Positions 100-123 (KDMIEESEAGRGTETSLPNVHHSS) are disordered. The span at 112 to 123 (TETSLPNVHHSS) shows a compositional bias: polar residues.

The protein belongs to the beta-defensin family. In terms of processing, the three-dimensional structure formed by the three intramolecular disulfide bridges is indispensable for antimicrobial activity.

It localises to the secreted. Host defense peptide that exhibits antimicrobial activity against both Gram-negative bacteria, such as E.coli and S.typhimurium, and Gram-positive bacteria, such as S.aureus and B.subtilis. Inhibits cell adhesion of E.coli on intestinal epithelial enterocytes. Causes rapid permeabilization of both the outer and inner membrane of E.coli, leading to morphological alterations on the bacterial surface. Binds to bacterial lipopolysaccharides (LPS) with high affinity, and may thereby be involved in immunoregulation through LPS neutralization. May contribute to epididymal innate immunity and protect the sperm against attack by microorganisms. This Gorilla gorilla gorilla (Western lowland gorilla) protein is Defensin beta 118 (DEFB118).